Consider the following 127-residue polypeptide: Holo-[acyl-carrier-protein] synthase (127 aa).

Mg(2+) is bound by residues aspartate 8 and glutamate 56.

This sequence belongs to the P-Pant transferase superfamily. AcpS family. Mg(2+) serves as cofactor.

The protein resides in the cytoplasm. The enzyme catalyses apo-[ACP] + CoA = holo-[ACP] + adenosine 3',5'-bisphosphate + H(+). In terms of biological role, transfers the 4'-phosphopantetheine moiety from coenzyme A to a Ser of acyl-carrier-protein. In Deinococcus deserti (strain DSM 17065 / CIP 109153 / LMG 22923 / VCD115), this protein is Holo-[acyl-carrier-protein] synthase.